We begin with the raw amino-acid sequence, 185 residues long: Protein GrpE (185 aa).

The span at 1–20 (MSQEKKEELQSEAQVTKEET) shows a compositional bias: basic and acidic residues. Positions 1–28 (MSQEKKEELQSEAQVTKEETPQANEAAA) are disordered.

It belongs to the GrpE family. Homodimer.

Its subcellular location is the cytoplasm. In terms of biological role, participates actively in the response to hyperosmotic and heat shock by preventing the aggregation of stress-denatured proteins, in association with DnaK and GrpE. It is the nucleotide exchange factor for DnaK and may function as a thermosensor. Unfolded proteins bind initially to DnaJ; upon interaction with the DnaJ-bound protein, DnaK hydrolyzes its bound ATP, resulting in the formation of a stable complex. GrpE releases ADP from DnaK; ATP binding to DnaK triggers the release of the substrate protein, thus completing the reaction cycle. Several rounds of ATP-dependent interactions between DnaJ, DnaK and GrpE are required for fully efficient folding. The chain is Protein GrpE from Sulfurimonas denitrificans (strain ATCC 33889 / DSM 1251) (Thiomicrospira denitrificans (strain ATCC 33889 / DSM 1251)).